The sequence spans 261 residues: Calbindin (261 aa).

Residue A2 is modified to N-acetylalanine. Residues 2-7 are interaction with RANBP9; that stretch reads AESHLQ. 5 consecutive EF-hand domains span residues 11–46, 53–88, 98–133, 142–177, and 186–221; these read ITAS…LLQA, ELSP…EENF, KSCE…LLEK, KLAE…QENF, and MCGK…LCEK. Ca(2+) is bound by residues D24, D26, S28, Y30, and E35. The Ca(2+) site is built by D111, D113, S115, E122, D155, N157, D159, K161, E166, D199, D201, N203, Y205, and E210.

This sequence belongs to the calbindin family. Interacts with RANBP9.

Buffers cytosolic calcium. May stimulate a membrane Ca(2+)-ATPase and a 3',5'-cyclic nucleotide phosphodiesterase. The sequence is that of Calbindin (Calb1) from Rattus norvegicus (Rat).